The sequence spans 190 residues: dTTP/UTP pyrophosphatase (190 aa).

D70 acts as the Proton acceptor in catalysis.

It belongs to the Maf family. YhdE subfamily. A divalent metal cation is required as a cofactor.

The protein localises to the cytoplasm. The catalysed reaction is dTTP + H2O = dTMP + diphosphate + H(+). The enzyme catalyses UTP + H2O = UMP + diphosphate + H(+). Nucleoside triphosphate pyrophosphatase that hydrolyzes dTTP and UTP. May have a dual role in cell division arrest and in preventing the incorporation of modified nucleotides into cellular nucleic acids. This Paramagnetospirillum magneticum (strain ATCC 700264 / AMB-1) (Magnetospirillum magneticum) protein is dTTP/UTP pyrophosphatase.